A 329-amino-acid chain; its full sequence is UDP-glucose 4-epimerase (329 aa).

NAD(+) contacts are provided by residues 11–12, 31–36, 51–52, 71–75, Thr-115, Tyr-139, Lys-143, and Phe-167; these read YV, DNFSTG, DV, and FAARS. Positions 115 and 139 each coordinate substrate. The active-site Proton acceptor is Tyr-139. Residues Asn-168, 185–186, 202–204, Arg-217, and 277–280 contribute to the substrate site; these read HL, FMF, and RAGD.

It belongs to the NAD(P)-dependent epimerase/dehydratase family. In terms of assembly, homodimer. Requires NAD(+) as cofactor.

The enzyme catalyses UDP-alpha-D-glucose = UDP-alpha-D-galactose. The protein operates within carbohydrate metabolism; galactose metabolism. Involved in the metabolism of galactose. Catalyzes the conversion of UDP-galactose (UDP-Gal) to UDP-glucose (UDP-Glc) through a mechanism involving the transient reduction of NAD. In Corynebacterium glutamicum (strain ATCC 13032 / DSM 20300 / JCM 1318 / BCRC 11384 / CCUG 27702 / LMG 3730 / NBRC 12168 / NCIMB 10025 / NRRL B-2784 / 534), this protein is UDP-glucose 4-epimerase (galE).